The following is a 396-amino-acid chain: S-adenosylmethionine synthase (396 aa).

ATP is bound at residue histidine 16. Residue aspartate 18 participates in Mg(2+) binding. Glutamate 44 contacts K(+). Positions 57 and 100 each coordinate L-methionine. The flexible loop stretch occupies residues 100 to 110 (QSPDINQGVDR). ATP-binding positions include 165–167 (DAK), aspartate 240, 246–247 (RK), alanine 263, and lysine 267. Position 240 (aspartate 240) interacts with L-methionine. Lysine 271 serves as a coordination point for L-methionine.

It belongs to the AdoMet synthase family. Homotetramer; dimer of dimers. The cofactor is Mg(2+). K(+) serves as cofactor.

The protein resides in the cytoplasm. The enzyme catalyses L-methionine + ATP + H2O = S-adenosyl-L-methionine + phosphate + diphosphate. Its pathway is amino-acid biosynthesis; S-adenosyl-L-methionine biosynthesis; S-adenosyl-L-methionine from L-methionine: step 1/1. Functionally, catalyzes the formation of S-adenosylmethionine (AdoMet) from methionine and ATP. The overall synthetic reaction is composed of two sequential steps, AdoMet formation and the subsequent tripolyphosphate hydrolysis which occurs prior to release of AdoMet from the enzyme. The chain is S-adenosylmethionine synthase from Pseudomonas fluorescens (strain ATCC BAA-477 / NRRL B-23932 / Pf-5).